A 232-amino-acid polypeptide reads, in one-letter code: Charged multivesicular body protein 4c (232 aa).

Disordered stretches follow at residues 1–23 (MSKLGKFFKGSRSSRARAAPSAQ) and 172–232 (EQEE…AWAT). The interval 1-153 (MSKLGKFFKG…EISEAFSQRV (153 aa)) is intramolecular interaction with C-terminus. Low complexity predominate over residues 11-23 (SRSSRARAAPSAQ). Coiled-coil stretches lie at residues 21–50 (SAQEALARLREIEEMMAKKQEYLENRIQRE) and 125–182 (LNKI…KMTS). An intramolecular interaction with N-terminus region spans residues 154–232 (QFADGFDEDE…DFKQLAAWAT (79 aa)). At serine 210 the chain carries Phosphoserine; by AURKB.

The protein belongs to the SNF7 family. In terms of assembly, probable core component of the endosomal sorting required for transport complex III (ESCRT-III). ESCRT-III components are thought to multimerize to form a flat lattice on the perimeter membrane of the endosome. Several assembly forms of ESCRT-III may exist that interact and act sequentially. Self-associates. Interacts with CHMP2A. Interacts with CHMP4A. Interacts with CHMP4B. Interacts with CHMP6. Interacts with VPS4A. Interacts with PDCD6IP; the interaction is direct. Phosphorylated at Ser-210 by AURKB during cytokinesis: together with ZFYVE19/ANCHR, phosphorylated CHMP4C retains abscission-competent VPS4 (VPS4A and/or VPS4B) at the midbody ring until abscission checkpoint signaling is terminated at late cytokinesis.

It is found in the cytoplasm. The protein localises to the cytosol. The protein resides in the late endosome membrane. It localises to the midbody. Its subcellular location is the midbody ring. In terms of biological role, probable core component of the endosomal sorting required for transport complex III (ESCRT-III) which is involved in multivesicular bodies (MVBs) formation and sorting of endosomal cargo proteins into MVBs. MVBs contain intraluminal vesicles (ILVs) that are generated by invagination and scission from the limiting membrane of the endosome and mostly are delivered to lysosomes enabling degradation of membrane proteins, such as stimulated growth factor receptors, lysosomal enzymes and lipids. The MVB pathway appears to require the sequential function of ESCRT-O, -I,-II and -III complexes. ESCRT-III proteins mostly dissociate from the invaginating membrane before the ILV is released. The ESCRT machinery also functions in topologically equivalent membrane fission events, such as the terminal stages of cytokinesis. Key component of the cytokinesis checkpoint, a process required to delay abscission to prevent both premature resolution of intercellular chromosome bridges and accumulation of DNA damage: upon phosphorylation by AURKB, together with ZFYVE19/ANCHR, retains abscission-competent VPS4 (VPS4A and/or VPS4B) at the midbody ring until abscission checkpoint signaling is terminated at late cytokinesis. Deactivation of AURKB results in dephosphorylation of CHMP4C followed by its dissociation from ANCHR and VPS4 and subsequent abscission. ESCRT-III proteins are believed to mediate the necessary vesicle extrusion and/or membrane fission activities, possibly in conjunction with the AAA ATPase VPS4. CHMP4A/B/C are required for the exosomal release of SDCBP, CD63 and syndecan. In Rattus norvegicus (Rat), this protein is Charged multivesicular body protein 4c (Chmp4c).